A 149-amino-acid polypeptide reads, in one-letter code: Cytochrome c oxidase subunit 5A, mitochondrial (149 aa).

Belongs to the cytochrome c oxidase subunit 5A family. In terms of assembly, component of the cytochrome c oxidase (complex IV, CIV), a multisubunit enzyme composed of a catalytic core of 3 subunits and several supernumerary subunits. The complex exists as a monomer or a dimer and forms supercomplexes (SCs) in the inner mitochondrial membrane with ubiquinol-cytochrome c oxidoreductase (cytochrome b-c1 complex, complex III, CIII).

Its subcellular location is the mitochondrion inner membrane. Its pathway is energy metabolism; oxidative phosphorylation. Functionally, component of the cytochrome c oxidase, the last enzyme in the mitochondrial electron transport chain which drives oxidative phosphorylation. The respiratory chain contains 3 multisubunit complexes succinate dehydrogenase (complex II, CII), ubiquinol-cytochrome c oxidoreductase (cytochrome b-c1 complex, complex III, CIII) and cytochrome c oxidase (complex IV, CIV), that cooperate to transfer electrons derived from NADH and succinate to molecular oxygen, creating an electrochemical gradient over the inner membrane that drives transmembrane transport and the ATP synthase. Cytochrome c oxidase is the component of the respiratory chain that catalyzes the reduction of oxygen to water. Electrons originating from reduced cytochrome c in the intermembrane space (IMS) are transferred via the dinuclear copper A center (CU(A)) of subunit 2 and heme A of subunit 1 to the active site in subunit 1, a binuclear center (BNC) formed by heme A3 and copper B (CU(B)). The BNC reduces molecular oxygen to 2 water molecules using 4 electrons from cytochrome c in the IMS and 4 protons from the mitochondrial matrix. The chain is Cytochrome c oxidase subunit 5A, mitochondrial from Drosophila melanogaster (Fruit fly).